Reading from the N-terminus, the 339-residue chain is Erlin-2 (339 aa).

Residues 1–3 (MAQ) lie on the Cytoplasmic side of the membrane. A helical transmembrane segment spans residues 4–24 (LGAVVAVASSFFCASLFSAVH). Over 25–339 (KIEEGHIGVY…EPLETATKDN (315 aa)) the chain is Extracellular. A glycan (N-linked (GlcNAc...) asparagine) is linked at asparagine 106. Positions 177–309 (EAIRRNYELM…DIPNMFMDSA (133 aa)) are interaction with ERLIN1. N6-acetyllysine is present on lysine 267.

Belongs to the band 7/mec-2 family. In terms of assembly, forms a heteromeric complex with ERLIN1. In complex with ERLIN1, interacts with RNF170. Interacts with activated ITPR1, independently of the degree of ITPR1 polyubiquitination. Interacts with SCAP, INSIG1, SREBF1 and SREBF2 under cholesterol sufficiency conditions; indicative for an association with the SCAP-SREBP-INSIG complex. Probably part of an AMFR/gp78 and INSIG1-containing ubiquitin ligase complex involved in ERAD of HMGCR. Interacts with TMUB1; TMUB1 bridges the association with AMFR. Interacts with SYVN1 and RNF139. Interacts with TMEM259. Interacts with TMEM41B. Deubiquitinated by USP25; leading to stabilization.

The protein resides in the endoplasmic reticulum membrane. Its function is as follows. Component of the ERLIN1/ERLIN2 complex which mediates the endoplasmic reticulum-associated degradation (ERAD) of inositol 1,4,5-trisphosphate receptors (IP3Rs) such as ITPR1. Promotes sterol-accelerated ERAD of HMGCR probably implicating an AMFR/gp78-containing ubiquitin ligase complex. Involved in regulation of cellular cholesterol homeostasis by regulation the SREBP signaling pathway. May promote ER retention of the SCAP-SREBF complex. In Rattus norvegicus (Rat), this protein is Erlin-2.